We begin with the raw amino-acid sequence, 48 residues long: Large ribosomal subunit protein bL33A (48 aa).

It belongs to the bacterial ribosomal protein bL33 family.

In Bacillus mycoides (strain KBAB4) (Bacillus weihenstephanensis), this protein is Large ribosomal subunit protein bL33A.